The chain runs to 291 residues: Beta-lactamase CTX-M-14 (291 aa).

An N-terminal signal peptide occupies residues methionine 1–alanine 28. Serine 73 serves as the catalytic Nucleophile; acyl-ester intermediate. 4 residues coordinate a beta-lactam: lysine 76, serine 133, glutamate 169, and serine 240.

It belongs to the class-A beta-lactamase family. Monomer.

Its subcellular location is the secreted. The enzyme catalyses a beta-lactam + H2O = a substituted beta-amino acid. Its activity is regulated as follows. Inhibited by the beta-lactamase-blocking agents clavulanic acid, tazobactam and sulbactam. Extended-spectrum beta-lactamase (ESBL) which confers resistance to penicillins, as well as first, second, and third-generation cephalosporins. Has cefotaxime-hydrolyzing activity. The sequence is that of Beta-lactamase CTX-M-14 from Escherichia coli.